The following is a 150-amino-acid chain: SsrA-binding protein (150 aa).

The disordered stretch occupies residues 129–150; that stretch reads KRQTLKSKEADREMARALRDRH.

Belongs to the SmpB family.

It localises to the cytoplasm. Functionally, required for rescue of stalled ribosomes mediated by trans-translation. Binds to transfer-messenger RNA (tmRNA), required for stable association of tmRNA with ribosomes. tmRNA and SmpB together mimic tRNA shape, replacing the anticodon stem-loop with SmpB. tmRNA is encoded by the ssrA gene; the 2 termini fold to resemble tRNA(Ala) and it encodes a 'tag peptide', a short internal open reading frame. During trans-translation Ala-aminoacylated tmRNA acts like a tRNA, entering the A-site of stalled ribosomes, displacing the stalled mRNA. The ribosome then switches to translate the ORF on the tmRNA; the nascent peptide is terminated with the 'tag peptide' encoded by the tmRNA and targeted for degradation. The ribosome is freed to recommence translation, which seems to be the essential function of trans-translation. In Syntrophotalea carbinolica (strain DSM 2380 / NBRC 103641 / GraBd1) (Pelobacter carbinolicus), this protein is SsrA-binding protein.